Here is a 429-residue protein sequence, read N- to C-terminus: Alpha-L-rhamnosidase rgxB (429 aa).

An N-terminal signal peptide occupies residues methionine 1 to serine 20. N-linked (GlcNAc...) asparagine glycans are attached at residues asparagine 67, asparagine 77, asparagine 97, asparagine 103, asparagine 112, asparagine 135, and asparagine 219. The PbH1 1 repeat unit spans residues serine 217 to alanine 238. The active-site Proton donor is the aspartate 231. Residues asparagine 239, asparagine 247, asparagine 278, and asparagine 344 are each glycosylated (N-linked (GlcNAc...) asparagine). PbH1 repeat units lie at residues serine 240–serine 260 and valine 271–threonine 292. A disulfide bridge connects residues cysteine 374 and cysteine 380. N-linked (GlcNAc...) asparagine glycans are attached at residues asparagine 387, asparagine 395, and asparagine 414.

This sequence belongs to the glycosyl hydrolase 28 family.

The protein localises to the secreted. It catalyses the reaction Hydrolysis of terminal non-reducing alpha-L-rhamnose residues in alpha-L-rhamnosides.. Its function is as follows. Alpha-L-rhamnosidase which is able to degrade p-nitrophenyl-alpha-L-rhamnopyranoside (pnp_Rha). The natural substrate of this enzyme has not been identified yet. In Aspergillus niger (strain ATCC MYA-4892 / CBS 513.88 / FGSC A1513), this protein is Alpha-L-rhamnosidase rgxB (rgxB).